The primary structure comprises 106 residues: Ribonuclease P protein component 4 (106 aa).

Residues Cys63, Cys66, Cys89, and Cys92 each contribute to the Zn(2+) site.

It belongs to the eukaryotic/archaeal RNase P protein component 4 family. Consists of a catalytic RNA component and at least 4-5 protein subunits. The cofactor is Zn(2+).

The protein resides in the cytoplasm. It carries out the reaction Endonucleolytic cleavage of RNA, removing 5'-extranucleotides from tRNA precursor.. Its function is as follows. Part of ribonuclease P, a protein complex that generates mature tRNA molecules by cleaving their 5'-ends. This Methanosphaerula palustris (strain ATCC BAA-1556 / DSM 19958 / E1-9c) protein is Ribonuclease P protein component 4.